The primary structure comprises 179 residues: Alpha-tubulin N-acetyltransferase (179 aa).

An N-acetyltransferase domain is found at methionine 1–phenylalanine 175. Residues phenylalanine 109–leucine 122 and serine 145–lysine 154 each bind acetyl-CoA.

It belongs to the acetyltransferase ATAT1 family.

The catalysed reaction is L-lysyl-[alpha-tubulin] + acetyl-CoA = N(6)-acetyl-L-lysyl-[alpha-tubulin] + CoA + H(+). In terms of biological role, specifically acetylates 'Lys-40' in alpha-tubulin on the lumenal side of microtubules. Promotes microtubule destabilization and accelerates microtubule dynamics; this activity may be independent of acetylation activity. Acetylates alpha-tubulin with a slow enzymatic rate, due to a catalytic site that is not optimized for acetyl transfer. Enters the microtubule through each end and diffuses quickly throughout the lumen of microtubules. Acetylates only long/old microtubules because of its slow acetylation rate since it does not have time to act on dynamically unstable microtubules before the enzyme is released. The protein is Alpha-tubulin N-acetyltransferase of Phytophthora infestans (strain T30-4) (Potato late blight agent).